The following is a 102-amino-acid chain: Monothiol glutaredoxin-S1 (102 aa).

One can recognise a Glutaredoxin domain in the interval 1-101; that stretch reads MEKISNLLED…SLLRRAGAIW (101 aa). Cysteine 21 contacts [2Fe-2S] cluster.

This sequence belongs to the glutaredoxin family. CC-type subfamily.

It localises to the cytoplasm. Functionally, may only reduce GSH-thiol disulfides, but not protein disulfides. The sequence is that of Monothiol glutaredoxin-S1 (GRXS1) from Arabidopsis thaliana (Mouse-ear cress).